A 383-amino-acid polypeptide reads, in one-letter code: Na(+)/H(+) antiporter NhaA (383 aa).

11 helical membrane passes run 10-30 (LIGG…NNSP), 56-76 (LMHW…GLEI), 91-111 (IITP…IYLS), 121-141 (GWAI…ALLG), 150-170 (LLVI…IAIF), 174-194 (SLSL…IICN), 206-226 (VVLG…ATLA), 254-274 (PWII…ISFS), 289-308 (IIWG…LAVF), 327-347 (GISL…VLAF), and 355-375 (AIKI…YIVL).

Belongs to the NhaA Na(+)/H(+) (TC 2.A.33) antiporter family.

The protein resides in the cell inner membrane. The enzyme catalyses Na(+)(in) + 2 H(+)(out) = Na(+)(out) + 2 H(+)(in). In terms of biological role, na(+)/H(+) antiporter that extrudes sodium in exchange for external protons. The chain is Na(+)/H(+) antiporter NhaA from Francisella tularensis subsp. holarctica (strain FTNF002-00 / FTA).